The chain runs to 111 residues: Large ribosomal subunit protein uL24 (111 aa).

It belongs to the universal ribosomal protein uL24 family. Part of the 50S ribosomal subunit.

One of two assembly initiator proteins, it binds directly to the 5'-end of the 23S rRNA, where it nucleates assembly of the 50S subunit. Functionally, one of the proteins that surrounds the polypeptide exit tunnel on the outside of the subunit. This chain is Large ribosomal subunit protein uL24, found in Chlamydia trachomatis serovar A (strain ATCC VR-571B / DSM 19440 / HAR-13).